The following is a 220-amino-acid chain: uncharacterized protein (220 aa).

The chain crosses the membrane as a helical span at residues 20–42; it reads FFKKLVPIIIIISIVVITIMVII.

It localises to the membrane. This is an uncharacterized protein from Rickettsia prowazekii (strain Madrid E).